Reading from the N-terminus, the 668-residue chain is DNA ligase (668 aa).

Residues 34–38, 83–84, and E113 contribute to the NAD(+) site; these read DAEYD and SL. K115 acts as the N6-AMP-lysine intermediate in catalysis. NAD(+)-binding residues include R136, E170, K286, and K310. Zn(2+) is bound by residues C404, C407, C422, and C427. One can recognise a BRCT domain in the interval 590–668; sequence ESDSYFAGKT…EVKMLEELKK (79 aa).

This sequence belongs to the NAD-dependent DNA ligase family. LigA subfamily. The cofactor is Mg(2+). Mn(2+) serves as cofactor.

The catalysed reaction is NAD(+) + (deoxyribonucleotide)n-3'-hydroxyl + 5'-phospho-(deoxyribonucleotide)m = (deoxyribonucleotide)n+m + AMP + beta-nicotinamide D-nucleotide.. Its function is as follows. DNA ligase that catalyzes the formation of phosphodiester linkages between 5'-phosphoryl and 3'-hydroxyl groups in double-stranded DNA using NAD as a coenzyme and as the energy source for the reaction. It is essential for DNA replication and repair of damaged DNA. This chain is DNA ligase, found in Bacillus pumilus (strain SAFR-032).